Consider the following 564-residue polypeptide: Arginine--tRNA ligase (564 aa).

A 'HIGH' region motif is present at residues 130 to 140 (ANPTGSLHIGH).

The protein belongs to the class-I aminoacyl-tRNA synthetase family. Monomer.

It localises to the cytoplasm. It catalyses the reaction tRNA(Arg) + L-arginine + ATP = L-arginyl-tRNA(Arg) + AMP + diphosphate. The polypeptide is Arginine--tRNA ligase (Malacoplasma penetrans (strain HF-2) (Mycoplasma penetrans)).